A 228-amino-acid chain; its full sequence is Geranylgeranylglyceryl phosphate synthase (228 aa).

Lys13 is a sn-glycerol 1-phosphate binding site. The Mg(2+) site is built by Asp15 and Thr41. Sn-glycerol 1-phosphate-binding positions include 159 to 164, Gly189, and 209 to 210; these read YIEYSG and GN.

The protein belongs to the GGGP/HepGP synthase family. Group I subfamily. It depends on Mg(2+) as a cofactor.

Its subcellular location is the cytoplasm. The catalysed reaction is sn-glycerol 1-phosphate + (2E,6E,10E)-geranylgeranyl diphosphate = sn-3-O-(geranylgeranyl)glycerol 1-phosphate + diphosphate. The protein operates within membrane lipid metabolism; glycerophospholipid metabolism. Functionally, prenyltransferase that catalyzes the transfer of the geranylgeranyl moiety of geranylgeranyl diphosphate (GGPP) to the C3 hydroxyl of sn-glycerol-1-phosphate (G1P). This reaction is the first ether-bond-formation step in the biosynthesis of archaeal membrane lipids. The sequence is that of Geranylgeranylglyceryl phosphate synthase from Methanospirillum hungatei JF-1 (strain ATCC 27890 / DSM 864 / NBRC 100397 / JF-1).